The following is a 214-amino-acid chain: Dynein axonemal assembly factor 6 (214 aa).

Disordered regions lie at residues 1-22 (MESE…QNVD) and 34-68 (ALSK…NIGP).

It belongs to the PIH1 family. Interacts with HSPA1A/B and HSP90AA1. Interacts with DNAAF2 and DNAAF4. Interacts wuth DNAI2. In terms of tissue distribution, expressed in testis, small intestine, prostate, adrenal gland, spleen, lung, bladder, breast and ovary. Expressed in ciliated epithelial cells.

Its subcellular location is the cytoplasm. It localises to the golgi apparatus. The protein resides in the trans-Golgi network. Functionally, plays a role in cytoplasmic pre-assembly of axonemal dynein. The sequence is that of Dynein axonemal assembly factor 6 from Homo sapiens (Human).